The primary structure comprises 373 residues: tRNA-specific 2-thiouridylase MnmA (373 aa).

ATP-binding positions include Gly-12–Ser-19 and Met-38. The interaction with target base in tRNA stretch occupies residues Asn-98 to Asp-100. Cys-103 functions as the Nucleophile in the catalytic mechanism. Cys-103 and Cys-200 form a disulfide bridge. Gly-127 serves as a coordination point for ATP. Residues Lys-150–Gln-152 are interaction with tRNA. The active-site Cysteine persulfide intermediate is Cys-200. Positions Arg-312–Tyr-313 are interaction with tRNA.

Belongs to the MnmA/TRMU family.

The protein localises to the cytoplasm. It catalyses the reaction S-sulfanyl-L-cysteinyl-[protein] + uridine(34) in tRNA + AH2 + ATP = 2-thiouridine(34) in tRNA + L-cysteinyl-[protein] + A + AMP + diphosphate + H(+). Catalyzes the 2-thiolation of uridine at the wobble position (U34) of tRNA, leading to the formation of s(2)U34. The sequence is that of tRNA-specific 2-thiouridylase MnmA from Streptococcus pyogenes serotype M12 (strain MGAS2096).